Here is a 126-residue protein sequence, read N- to C-terminus: Glycine cleavage system H protein (126 aa).

The Lipoyl-binding domain occupies 21 to 103 (TVTVGISDHA…YESGWIARIK (83 aa)). K62 carries the N6-lipoyllysine modification.

It belongs to the GcvH family. In terms of assembly, the glycine cleavage system is composed of four proteins: P, T, L and H. The cofactor is (R)-lipoate.

In terms of biological role, the glycine cleavage system catalyzes the degradation of glycine. The H protein shuttles the methylamine group of glycine from the P protein to the T protein. This is Glycine cleavage system H protein from Aliivibrio fischeri (strain MJ11) (Vibrio fischeri).